The following is a 124-amino-acid chain: Large ribosomal subunit protein bL12 (124 aa).

The protein belongs to the bacterial ribosomal protein bL12 family. In terms of assembly, homodimer. Part of the ribosomal stalk of the 50S ribosomal subunit. Forms a multimeric L10(L12)X complex, where L10 forms an elongated spine to which 2 to 4 L12 dimers bind in a sequential fashion. Binds GTP-bound translation factors.

In terms of biological role, forms part of the ribosomal stalk which helps the ribosome interact with GTP-bound translation factors. Is thus essential for accurate translation. This Cupriavidus pinatubonensis (strain JMP 134 / LMG 1197) (Cupriavidus necator (strain JMP 134)) protein is Large ribosomal subunit protein bL12.